A 490-amino-acid chain; its full sequence is Gram-negative bacteria-binding protein 3 (490 aa).

The N-terminal stretch at 1–25 is a signal peptide; sequence MADALRFVAWSCCLQLLFLLLGVQG. A CBM39 domain is found at 26–126; it reads YEVPKAKIDV…GSFVVNGYSG (101 aa). In terms of domain architecture, GH16 spans 162–490; that stretch reads TEVNGAPTRC…KIDYVKVYSL (329 aa). N-linked (GlcNAc...) asparagine glycosylation is found at Asn362 and Asn373.

The protein belongs to the insect beta-1,3-glucan binding protein family.

The protein resides in the secreted. Involved in the recognition of invading microorganisms. Binds specifically to beta-1,3-glucan and activates the phenoloxidase cascade. The sequence is that of Gram-negative bacteria-binding protein 3 from Drosophila melanogaster (Fruit fly).